Here is an 89-residue protein sequence, read N- to C-terminus: Small ribosomal subunit protein uS15 (89 aa).

Positions 1 to 21 (MVLDPTQKKSVIDAHAKHEGD) are enriched in basic and acidic residues. The disordered stretch occupies residues 1 to 24 (MVLDPTQKKSVIDAHAKHEGDTGS).

This sequence belongs to the universal ribosomal protein uS15 family. As to quaternary structure, part of the 30S ribosomal subunit. Forms a bridge to the 50S subunit in the 70S ribosome, contacting the 23S rRNA.

Its function is as follows. One of the primary rRNA binding proteins, it binds directly to 16S rRNA where it helps nucleate assembly of the platform of the 30S subunit by binding and bridging several RNA helices of the 16S rRNA. Forms an intersubunit bridge (bridge B4) with the 23S rRNA of the 50S subunit in the ribosome. This chain is Small ribosomal subunit protein uS15, found in Desulfovibrio desulfuricans (strain ATCC 27774 / DSM 6949 / MB).